We begin with the raw amino-acid sequence, 255 residues long: tRNA (guanine-N(7)-)-methyltransferase (255 aa).

The segment at 1–35 (MTRTNDASGGGKLPRKRFYRARAHSNPLSDSHFPV) is disordered. The span at 13-23 (LPRKRFYRARA) shows a compositional bias: basic residues. Residues glycine 75, 98–99 (EL), 131–132 (NS), and leucine 151 each bind S-adenosyl-L-methionine. Residue aspartate 154 is part of the active site. 229-231 (TEE) lines the S-adenosyl-L-methionine pocket.

It belongs to the class I-like SAM-binding methyltransferase superfamily. TrmB family.

It localises to the nucleus. It catalyses the reaction guanosine(46) in tRNA + S-adenosyl-L-methionine = N(7)-methylguanosine(46) in tRNA + S-adenosyl-L-homocysteine. Its pathway is tRNA modification; N(7)-methylguanine-tRNA biosynthesis. Catalyzes the formation of N(7)-methylguanine at position 46 (m7G46) in tRNA. The sequence is that of tRNA (guanine-N(7)-)-methyltransferase from Zea mays (Maize).